A 343-amino-acid polypeptide reads, in one-letter code: MDHAADAHRTDLMTITRHVLNEQSRNPESRGDFTILLSHIVLGCKFVASAVNKAGLAQLIGLAGETNVQGEEQKKLDVLSNEVFVKALVSSGRTCVLVSEEDEETTFVDPKLRGKYCVCFDPLDGSSNIDCGVSIGTIFGIYMIKDKDNVTLSDVLQPGKDMLAAGYCMYGSSCTLVLSTGTGVNGFTLDPSLGEFILTHPDIKIPKKGKIYSVNEGNAKNWDVPVAKFVEKCKYPKDGSPPKSLRYIGSMVADVHRTLLYGGVFLYPADQKSPNGKLRVLYEVFPMSFLMEQAGGQSFTGKERALDLVPTKIHERSPIFLGSYDDVEEIKALYAEQAKSSSA.

Residues glutamate 71, glutamate 100, aspartate 121, leucine 123, and aspartate 124 each coordinate Mg(2+). Residues 124–127 (DGSS), asparagine 215, tyrosine 247, tyrosine 267, and lysine 277 each bind substrate. A Mg(2+)-binding site is contributed by glutamate 283.

It belongs to the FBPase class 1 family. Requires Mg(2+) as cofactor.

Its subcellular location is the cytoplasm. The catalysed reaction is beta-D-fructose 1,6-bisphosphate + H2O = beta-D-fructose 6-phosphate + phosphate. The chain is Fructose-1,6-bisphosphatase, cytosolic (CFBP) from Saccharum hybrid (Sugarcane).